Here is a 64-residue protein sequence, read N- to C-terminus: Toxin BmCa-1 (64 aa).

Positions 1–18 (MNTFVVVFLLLTAILCHA) are cleaved as a signal peptide. Positions 19–27 (EHALDETAR) are excised as a propeptide. Disulfide bonds link cysteine 29–cysteine 43, cysteine 36–cysteine 49, and cysteine 42–cysteine 58.

This sequence belongs to the scorpion calcin-like family. Expressed by the venom gland.

It is found in the secreted. Its function is as follows. May increase intracellular calcium release through the activation of nuclear inositol 1,4,5-trisphosphate receptors (ITPR) of cardiomyocytes, thereby causing an increase in the contraction frequency of these cells. The protein is Toxin BmCa-1 of Olivierus martensii (Manchurian scorpion).